The following is a 516-amino-acid chain: 1-pyrroline-5-carboxylate dehydrogenase (516 aa).

Catalysis depends on residues Glu287 and Cys321.

It belongs to the aldehyde dehydrogenase family. RocA subfamily.

It carries out the reaction L-glutamate 5-semialdehyde + NAD(+) + H2O = L-glutamate + NADH + 2 H(+). It participates in amino-acid degradation; L-proline degradation into L-glutamate; L-glutamate from L-proline: step 2/2. The chain is 1-pyrroline-5-carboxylate dehydrogenase from Bacillus licheniformis (strain ATCC 14580 / DSM 13 / JCM 2505 / CCUG 7422 / NBRC 12200 / NCIMB 9375 / NCTC 10341 / NRRL NRS-1264 / Gibson 46).